The chain runs to 1520 residues: DNA-directed RNA polymerase subunit beta'' (1520 aa).

Residues cysteine 220, cysteine 296, cysteine 303, and cysteine 306 each contribute to the Zn(2+) site. Basic and acidic residues-rich tracts occupy residues 645-654 (TREEEYRTRE) and 664-674 (PENKYRTREGE). Disordered stretches follow at residues 645-676 (TREE…GEGE) and 705-786 (YRTL…KKEG). 2 stretches are compositionally biased toward acidic residues: residues 730–748 (GEYE…SSED) and 756–779 (TLEE…PEED).

Belongs to the RNA polymerase beta' chain family. RpoC2 subfamily. As to quaternary structure, in plastids the minimal PEP RNA polymerase catalytic core is composed of four subunits: alpha, beta, beta', and beta''. When a (nuclear-encoded) sigma factor is associated with the core the holoenzyme is formed, which can initiate transcription. Zn(2+) is required as a cofactor.

The protein resides in the plastid. It localises to the chloroplast. The enzyme catalyses RNA(n) + a ribonucleoside 5'-triphosphate = RNA(n+1) + diphosphate. Its function is as follows. DNA-dependent RNA polymerase catalyzes the transcription of DNA into RNA using the four ribonucleoside triphosphates as substrates. This Sorghum bicolor (Sorghum) protein is DNA-directed RNA polymerase subunit beta''.